The chain runs to 289 residues: Protein charybde (289 aa).

The tract at residues 119-142 is disordered; the sequence is TAHHPGHGHGPGPSPMPASPLQST.

Belongs to the DDIT4 family.

It localises to the cytoplasm. Its function is as follows. Inhibits cell growth by regulating the Tor pathway upstream of the Tsc1-Tsc2 complex and downstream of Akt1. Acts as a cell death activator during head development. The protein is Protein charybde (chrb) of Drosophila pseudoobscura pseudoobscura (Fruit fly).